Consider the following 967-residue polypeptide: Isoleucine--tRNA ligase (967 aa).

A 'HIGH' region motif is present at residues 64-74; the sequence is PYANGNIHIGH. Residue glutamate 600 coordinates L-isoleucyl-5'-AMP. The short motif at 641–645 is the 'KMSKS' region element; the sequence is KQSKS. Lysine 644 lines the ATP pocket.

This sequence belongs to the class-I aminoacyl-tRNA synthetase family. IleS type 1 subfamily. Monomer.

It localises to the cytoplasm. The catalysed reaction is tRNA(Ile) + L-isoleucine + ATP = L-isoleucyl-tRNA(Ile) + AMP + diphosphate. Catalyzes the attachment of isoleucine to tRNA(Ile). As IleRS can inadvertently accommodate and process structurally similar amino acids such as valine, to avoid such errors it has two additional distinct tRNA(Ile)-dependent editing activities. One activity is designated as 'pretransfer' editing and involves the hydrolysis of activated Val-AMP. The other activity is designated 'posttransfer' editing and involves deacylation of mischarged Val-tRNA(Ile). This chain is Isoleucine--tRNA ligase, found in Agrobacterium fabrum (strain C58 / ATCC 33970) (Agrobacterium tumefaciens (strain C58)).